The following is a 508-amino-acid chain: MGSCCSCPDKDTVPDNHRNKFKVINVDDDGNELGSGIMELTDTELILYTRKRDSVKWHYLCLRRYGYDSNLFSFESGRRCQTGQGIFAFKCARAEELFNMLQEIMQNNSINVVEEPVVERNNHQTELEVPRTPRTPTTPGFAAQNLPNGYPRYPSFGDASSHPSSRHPSVGSARLPSVGEESTHPLLVAEEQVHTYVNTTGVQEERKNRTSVHVPLEARVSNAESSTPKEEPSSIEDRDPQILLEPEGVKFVLGPTPVQKQLMEKEKLEQLGRDQVSGSGANNTEWDTGYDSDERRDAPSVNKLVYENINGLSIPSASGVRRGRLTSTSTSDTQNINNSAQRRTALLNYENLPSLPPVWEARKLSRDEDDNLGPKTPSLNGYHNNLDPMHNYVNTENVTVPASAHKIEYSRRRDCTPTVFNFDIRRPSLEHRQLNYIQVDLEGGSDSDNPQTPKTPTTPLPQTPTRRTELYAVIDIERTAAMSNLQKALPRDDGTSRKTRHNSTDLPM.

Gly-2 carries N-myristoyl glycine lipidation. Positions 13 to 115 constitute an IRS-type PTB domain; it reads VPDNHRNKFK…QNNSINVVEE (103 aa). A compositionally biased stretch (basic and acidic residues) spans 122-131; that stretch reads NHQTELEVPR. The interval 122 to 180 is disordered; it reads NHQTELEVPRTPRTPTTPGFAAQNLPNGYPRYPSFGDASSHPSSRHPSVGSARLPSVGE. At Ser-177 the chain carries Phosphoserine. The residue at position 196 (Tyr-196) is a Phosphotyrosine; by FGFR1. Disordered regions lie at residues 200–243 and 270–297; these read TGVQ…PQIL and QLGR…ERRD. Phosphoserine is present on residues Ser-211 and Ser-221. Positions 227–240 are enriched in basic and acidic residues; the sequence is TPKEEPSSIEDRDP. Residues 276–286 show a composition bias toward polar residues; that stretch reads VSGSGANNTEW. Residue Tyr-306 is modified to Phosphotyrosine; by FGFR1. Residues 315–338 are disordered; the sequence is PSASGVRRGRLTSTSTSDTQNINN. A compositionally biased stretch (polar residues) spans 325–338; it reads LTSTSTSDTQNINN. The residue at position 349 (Tyr-349) is a Phosphotyrosine; by FGFR1. A Phosphoserine modification is found at Ser-365. The disordered stretch occupies residues 366–385; that stretch reads RDEDDNLGPKTPSLNGYHNN. Tyr-392 and Tyr-436 each carry phosphotyrosine; by FGFR1. The disordered stretch occupies residues 441-467; the sequence is LEGGSDSDNPQTPKTPTTPLPQTPTRR. Tyr-471 bears the Phosphotyrosine; by FGFR1 mark. Residues 483–508 form a disordered region; sequence SNLQKALPRDDGTSRKTRHNSTDLPM.

As to quaternary structure, part of a complex containing FRS2, GRB2, GAB1, PIK3R1 and SOS1. Part of a complex containing GRB2 and CBL. Identified in a complex containing FGFR4, NCAM1, CDH2, PLCG1, FRS2, SRC, SHC1, GAP43 and CTTN. Binds RET. Binds ALK, FGFR1, CKS2, MAPK1/ERK2, MAPK3/ERK1 and SRC. The tyrosine-phosphorylated protein binds the SH2 domains of GRB2 and PTPN11. Interacts with NTRK1, NTRK2 and NTRK3 (phosphorylated upon ligand-binding). Post-translationally, phosphorylated by ULK2 in vitro. Phosphorylated on tyrosine residues upon stimulation by NGF or FGF2. Phosphorylated on tyrosine residues by activated ALK and FGFR1. Phosphorylated on tyrosine residues upon activation of FGFR2 and FGFR3. Phosphorylated on threonine residues by MAP kinases; this inhibits tyrosine phosphorylation, and thereby down-regulates FRS2-mediated activation of MAP kinases. Ubiquitinated when tyrosine phosphorylated and in a complex with GRB2. The unphosphorylated form is not subject to ubiquitination. As to expression, highly expressed in heart, brain, spleen, lung, liver, skeletal muscle, kidney and testis.

It localises to the endomembrane system. In terms of biological role, adapter protein that links activated FGR and NGF receptors to downstream signaling pathways. Plays an important role in the activation of MAP kinases and in the phosphorylation of PIK3R1, the regulatory subunit of phosphatidylinositol 3-kinase, in response to ligand-mediated activation of FGFR1. Modulates signaling via SHC1 by competing for a common binding site on NTRK1. The sequence is that of Fibroblast growth factor receptor substrate 2 (FRS2) from Homo sapiens (Human).